We begin with the raw amino-acid sequence, 840 residues long: MAEKISPGMQQYLDIKQDYPDAFLLFRMGDFYELFYEDAVNAAQILELTLTSRNKNSENPIPMAGVPHHAATEYIDKLVDLGYKVAVAEQMEDPKKAVGIVKRAVTQVITPGTTIDTANSVDNNFLVAIDFKAKRYALSYMDLSTGEFKVTELSEFSAVVGEIASLKAREIVVGFPLDEAQVKVFERQMNLLISEQFEIPENLLIELSGLTALENQAASKLLAYVKETQMRDLSHLQEVEHYEIKDFLQMDFATKSSLELTANKRENKKHGTLYWLLDETKTAMGTRMLRSWIDRPLVSNSAIQKRMEIVQVFLDHFFERSDLIEALKGVYDLERLASRVSFGKAVPVDFLQLANSLSNVPAIKNILEVLDEMPLNELRSQLDEIPELSGLINSAISENASRTITEGGIIKKGYNVQLDKYREALENGTSWIAKLEADEKAKTGISTLRIDYNRKDGYYFHITQSQLNSVPEHFYRKATLKNSERFGSQELTEIEEIMLEAREKSSSLEYDLFMGLRAETEQYIGRLQALAKTIAEIDCLQSLSVVAEKQGYIRPTLTEGSRIVEIKGGRHAVVEAVMGAQEYVPNDIELPEQTDIQLITGPNMSGKSTYMRQFALTVIMAQIGSFVPAETANLPIFDAIFTRIGASDNLISGESTFMVEMSEANHAIQKATSRSLIIFDELGRGTATYDGMALAQAIIEYVHEHIGAKTLFATHYHELTDLDKELDHLDNVHVATLEQNGNVTFLHKITDGPADKSYGIHVAKIAGLPQTLLERADLILQKLENKPLPAKKVADEQEQLSLFDFAENSSEIIEKIKGQNVDNMTAREALNFLWELKDSL.

An ATP-binding site is contributed by 601–608; sequence GPNMSGKS.

It belongs to the DNA mismatch repair MutS family.

In terms of biological role, this protein is involved in the repair of mismatches in DNA. It is possible that it carries out the mismatch recognition step. This protein has a weak ATPase activity. In Lactococcus lactis subsp. cremoris (strain MG1363), this protein is DNA mismatch repair protein MutS.